Consider the following 181-residue polypeptide: ATP synthase subunit delta (181 aa).

Belongs to the ATPase delta chain family. In terms of assembly, F-type ATPases have 2 components, F(1) - the catalytic core - and F(0) - the membrane proton channel. F(1) has five subunits: alpha(3), beta(3), gamma(1), delta(1), epsilon(1). F(0) has three main subunits: a(1), b(2) and c(10-14). The alpha and beta chains form an alternating ring which encloses part of the gamma chain. F(1) is attached to F(0) by a central stalk formed by the gamma and epsilon chains, while a peripheral stalk is formed by the delta and b chains.

The protein localises to the cell membrane. F(1)F(0) ATP synthase produces ATP from ADP in the presence of a proton or sodium gradient. F-type ATPases consist of two structural domains, F(1) containing the extramembraneous catalytic core and F(0) containing the membrane proton channel, linked together by a central stalk and a peripheral stalk. During catalysis, ATP synthesis in the catalytic domain of F(1) is coupled via a rotary mechanism of the central stalk subunits to proton translocation. Functionally, this protein is part of the stalk that links CF(0) to CF(1). It either transmits conformational changes from CF(0) to CF(1) or is implicated in proton conduction. The protein is ATP synthase subunit delta of Lacticaseibacillus paracasei (strain ATCC 334 / BCRC 17002 / CCUG 31169 / CIP 107868 / KCTC 3260 / NRRL B-441) (Lactobacillus paracasei).